The primary structure comprises 608 residues: Sensor protein kinase WalK (608 aa).

2 helical membrane passes run 14 to 34 (LVIV…LYFT) and 183 to 203 (IFIV…FFIA). The region spanning 204–256 (RTITKPITDMRNQTVEMSRGNYTQRVKIYGNDEIGELALAFNNLSKRVQEAQA) is the HAMP domain. The PAS domain occupies 261-331 (EKRRLDSVIT…EIQENNDSFL (71 aa)). Zn(2+) contacts are provided by histidine 271, aspartate 274, histidine 364, and glutamate 368. The PAC domain maps to 314–378 (LEDEFKLEEI…QQQVERERRE (65 aa)). Residues 382–600 (NVSHELRTPL…SIFITLPCEV (219 aa)) enclose the Histidine kinase domain. Position 385 is a phosphohistidine; by autocatalysis (histidine 385).

In terms of assembly, forms homodimers. Forms homooligomers. Autophosphorylated.

The protein localises to the cell membrane. It carries out the reaction ATP + protein L-histidine = ADP + protein N-phospho-L-histidine.. Its activity is regulated as follows. By zinc. Zinc-binding negatively regulates WalK kinase activity and thus autophosphorylation. Member of the two-component regulatory system WalK/WalR that regulates genes involved in cell wall metabolism, virulence regulation, biofilm production, oxidative stress resistance and antibiotic resistance via direct or indirect regulation of autolysins. Functions as a sensor protein kinase which is autophosphorylated at a histidine residue in the dimerization domain and transfers its phosphate group to the conserved aspartic acid residue in the regulatory domain of WalR. In turn, WalR binds to the upstream promoter regions of the target genes to positively and negatively regulate their expression. In Staphylococcus aureus (strain Newman), this protein is Sensor protein kinase WalK (walK).